The chain runs to 138 residues: Histone H2B.4 (138 aa).

Residues 1–39 (MAPKAAEKKPAEKKPAGKAPAEKLPKAEKKISKDAGGSE) show a composition bias toward basic and acidic residues. Residues 1-48 (MAPKAAEKKPAEKKPAGKAPAEKLPKAEKKISKDAGGSEKKKKKSKKS) are disordered. At Ala2 the chain carries N,N,N-trimethylalanine; alternate. N,N-dimethylalanine; alternate is present on Ala2. Ala2 is modified (N-methylalanine; alternate). N6-methyllysine is present on Lys4. An N6-acetyllysine mark is found at Lys8 and Lys13. Lys14 carries the N6,N6-dimethyllysine modification. 4 positions are modified to N6-acetyllysine: Lys18, Lys23, Lys29, and Lys30. Lys135 participates in a covalent cross-link: Glycyl lysine isopeptide (Lys-Gly) (interchain with G-Cter in ubiquitin).

This sequence belongs to the histone H2B family. As to quaternary structure, the nucleosome is a histone octamer containing two molecules each of H2A, H2B, H3 and H4 assembled in one H3-H4 heterotetramer and two H2A-H2B heterodimers. The octamer wraps approximately 147 bp of DNA. Can be acetylated to form H2BK6ac, H2BK33ac and H2BK34ac. In terms of processing, monoubiquitinated by BRE1 to form H2BK143ub1 and deubiquitinated by UBP26. Required for heterochromatic histone H3 di- and trimethylation at H3K4me. May give a specific tag for epigenetic transcriptional activation.

Its subcellular location is the nucleus. The protein resides in the chromosome. Functionally, core component of nucleosome. Nucleosomes wrap and compact DNA into chromatin, limiting DNA accessibility to the cellular machineries which require DNA as a template. Histones thereby play a central role in transcription regulation, DNA repair, DNA replication and chromosomal stability. DNA accessibility is regulated via a complex set of post-translational modifications of histones, also called histone code, and nucleosome remodeling. The polypeptide is Histone H2B.4 (Arabidopsis thaliana (Mouse-ear cress)).